The chain runs to 426 residues: Cdc25-like protein phosphatase twine (426 aa).

The tract at residues 1 to 27 (MASKRLMLDVEEEDDESGACGQENFDP) is disordered. In terms of domain architecture, Rhodanese spans 265 to 371 (SQGGYEIIDC…FFGLYSQLCQ (107 aa)). Cysteine 318 is a catalytic residue.

This sequence belongs to the MPI phosphatase family. In terms of tissue distribution, expressed in developing male and female germ cells.

It carries out the reaction O-phospho-L-tyrosyl-[protein] + H2O = L-tyrosyl-[protein] + phosphate. Required during meiosis. Regulates the transition from the extended G2 phase to the onset of the first meiotic division. The sequence is that of Cdc25-like protein phosphatase twine (twe) from Drosophila melanogaster (Fruit fly).